The primary structure comprises 395 residues: Flavohemoprotein (395 aa).

In terms of domain architecture, Globin spans 1 to 136 (MLDQQTIATI…LANVFIQRES (136 aa)). His85 is a heme b binding site. Catalysis depends on charge relay system residues Tyr95 and Glu135. The segment at 147 to 395 (GGWHGIRPFR…YECFGPHKVI (249 aa)) is reductase. The region spanning 150–255 (HGIRPFRIVA…AAPHGDFYLE (106 aa)) is the FAD-binding FR-type domain. FAD contacts are provided by residues Tyr188 and 204 to 207 (RQYS). Residue 268–273 (GVGQTP) coordinates NADP(+). 388 to 391 (CFGP) lines the FAD pocket.

This sequence belongs to the globin family. Two-domain flavohemoproteins subfamily. In the C-terminal section; belongs to the flavoprotein pyridine nucleotide cytochrome reductase family. Requires heme b as cofactor. It depends on FAD as a cofactor.

The protein localises to the cytoplasm. The enzyme catalyses 2 nitric oxide + NADPH + 2 O2 = 2 nitrate + NADP(+) + H(+). It catalyses the reaction 2 nitric oxide + NADH + 2 O2 = 2 nitrate + NAD(+) + H(+). Its function is as follows. Is involved in NO detoxification in an aerobic process, termed nitric oxide dioxygenase (NOD) reaction that utilizes O(2) and NAD(P)H to convert NO to nitrate, which protects the bacterium from various noxious nitrogen compounds. Therefore, plays a central role in the inducible response to nitrosative stress. This is Flavohemoprotein (hmp) from Dickeya dadantii (strain 3937) (Erwinia chrysanthemi (strain 3937)).